Here is a 481-residue protein sequence, read N- to C-terminus: Protein nucleotidyltransferase YdiU (481 aa).

Residues Gly-85, Gly-87, Arg-88, Lys-108, Asp-120, Gly-121, Arg-172, and Arg-179 each coordinate ATP. Residue Asp-248 is the Proton acceptor of the active site. 2 residues coordinate Mg(2+): Asn-249 and Asp-258. An ATP-binding site is contributed by Asp-258.

The protein belongs to the SELO family. It depends on Mg(2+) as a cofactor. The cofactor is Mn(2+).

It catalyses the reaction L-seryl-[protein] + ATP = 3-O-(5'-adenylyl)-L-seryl-[protein] + diphosphate. The catalysed reaction is L-threonyl-[protein] + ATP = 3-O-(5'-adenylyl)-L-threonyl-[protein] + diphosphate. The enzyme catalyses L-tyrosyl-[protein] + ATP = O-(5'-adenylyl)-L-tyrosyl-[protein] + diphosphate. It carries out the reaction L-histidyl-[protein] + UTP = N(tele)-(5'-uridylyl)-L-histidyl-[protein] + diphosphate. It catalyses the reaction L-seryl-[protein] + UTP = O-(5'-uridylyl)-L-seryl-[protein] + diphosphate. The catalysed reaction is L-tyrosyl-[protein] + UTP = O-(5'-uridylyl)-L-tyrosyl-[protein] + diphosphate. Nucleotidyltransferase involved in the post-translational modification of proteins. It can catalyze the addition of adenosine monophosphate (AMP) or uridine monophosphate (UMP) to a protein, resulting in modifications known as AMPylation and UMPylation. The sequence is that of Protein nucleotidyltransferase YdiU from Cereibacter sphaeroides (strain KD131 / KCTC 12085) (Rhodobacter sphaeroides).